Here is a 401-residue protein sequence, read N- to C-terminus: Acetylornithine aminotransferase (401 aa).

Residues 121 to 122 and phenylalanine 154 contribute to the pyridoxal 5'-phosphate site; that span reads GA. N(2)-acetyl-L-ornithine is bound at residue arginine 157. Residue 239-242 participates in pyridoxal 5'-phosphate binding; it reads DEVQ. Lysine 268 is modified (N6-(pyridoxal phosphate)lysine). Residue serine 296 coordinates N(2)-acetyl-L-ornithine. A pyridoxal 5'-phosphate-binding site is contributed by threonine 297.

This sequence belongs to the class-III pyridoxal-phosphate-dependent aminotransferase family. ArgD subfamily. In terms of assembly, homodimer. It depends on pyridoxal 5'-phosphate as a cofactor.

It localises to the cytoplasm. It catalyses the reaction N(2)-acetyl-L-ornithine + 2-oxoglutarate = N-acetyl-L-glutamate 5-semialdehyde + L-glutamate. Its pathway is amino-acid biosynthesis; L-arginine biosynthesis; N(2)-acetyl-L-ornithine from L-glutamate: step 4/4. The chain is Acetylornithine aminotransferase from Myxococcus xanthus.